A 118-amino-acid polypeptide reads, in one-letter code: Large ribosomal subunit protein bL20 (118 aa).

It belongs to the bacterial ribosomal protein bL20 family.

Binds directly to 23S ribosomal RNA and is necessary for the in vitro assembly process of the 50S ribosomal subunit. It is not involved in the protein synthesizing functions of that subunit. The polypeptide is Large ribosomal subunit protein bL20 (Thermosipho africanus (strain TCF52B)).